The sequence spans 387 residues: Protein mab-21-like 3 (387 aa).

Belongs to the mab-21 family.

In Danio rerio (Zebrafish), this protein is Protein mab-21-like 3 (mab21L3).